A 375-amino-acid polypeptide reads, in one-letter code: Alcohol dehydrogenase 1A (375 aa).

Glycine 1 is subject to N-acetylglycine. 7 residues coordinate Zn(2+): cysteine 46, histidine 67, cysteine 97, cysteine 100, cysteine 103, cysteine 111, and cysteine 174. NAD(+) contacts are provided by residues 199 to 204 (GLGGVG), aspartate 223, lysine 228, 293 to 295 (VGL), and arginine 370.

It belongs to the zinc-containing alcohol dehydrogenase family. Class-I subfamily. Multimeric (with different ratios of monomers). It depends on Zn(2+) as a cofactor.

It is found in the cytoplasm. The enzyme catalyses a primary alcohol + NAD(+) = an aldehyde + NADH + H(+). It carries out the reaction a secondary alcohol + NAD(+) = a ketone + NADH + H(+). This Saara hardwickii (Indian spiny-tailed lizard) protein is Alcohol dehydrogenase 1A.